The following is a 278-amino-acid chain: MNILDGKSLAKKIKHNIKQEVKHLERKPKLVVVLVGDDQASLVYVKNKVQACADVGFSSQLDMFEKDVEEDVLLNHIKSLNEQEDVDGILVQLPLPSHISMQKVIDTIDPSKDVDGFHPQNMGKLFSGDLENAFIPCTPLGIKLLLDEYNIDLKGKNVCIVGAGFIVGKPLSMLMLNYDATVSVCHKYTKDIVEYTKTADILISATGVPFLIKDYMVKEGAVVIDVGISKVNGKIVGDVDFESISQKASFITPVPGGVGPMTVATLLLNTLKAYKQRI.

NADP(+) contacts are provided by residues 162–164 (GAG) and I228.

Belongs to the tetrahydrofolate dehydrogenase/cyclohydrolase family. As to quaternary structure, homodimer.

The enzyme catalyses (6R)-5,10-methylene-5,6,7,8-tetrahydrofolate + NADP(+) = (6R)-5,10-methenyltetrahydrofolate + NADPH. It carries out the reaction (6R)-5,10-methenyltetrahydrofolate + H2O = (6R)-10-formyltetrahydrofolate + H(+). It participates in one-carbon metabolism; tetrahydrofolate interconversion. In terms of biological role, catalyzes the oxidation of 5,10-methylenetetrahydrofolate to 5,10-methenyltetrahydrofolate and then the hydrolysis of 5,10-methenyltetrahydrofolate to 10-formyltetrahydrofolate. This Hydrogenobaculum sp. (strain Y04AAS1) protein is Bifunctional protein FolD.